The following is a 203-amino-acid chain: MSRYTGPSWKQARRLGLSLTGTGKELARRNYVPGQHGPNNRSKLSEYGLQLAEKQKLRFTYGVGEKQFRNLFVQATKIKEGILGFNFMLLLERRLDNVVYRLGLATTRRQARQFVNHGHILVDGKRVDIPSYRVTPGQVISVREKSLKVPAILEAVEATLGRPAFVSFDAEKLEGSLTRLPERDEINPEINEALVVEFYNKML.

The S4 RNA-binding domain occupies 93–156 (RRLDNVVYRL…LKVPAILEAV (64 aa)).

The protein belongs to the universal ribosomal protein uS4 family. Part of the 30S ribosomal subunit. Contacts protein S5. The interaction surface between S4 and S5 is involved in control of translational fidelity.

Its function is as follows. One of the primary rRNA binding proteins, it binds directly to 16S rRNA where it nucleates assembly of the body of the 30S subunit. Functionally, with S5 and S12 plays an important role in translational accuracy. This is Small ribosomal subunit protein uS4 from Streptococcus gordonii (strain Challis / ATCC 35105 / BCRC 15272 / CH1 / DL1 / V288).